Reading from the N-terminus, the 734-residue chain is Probable carboxypeptidase X1 (734 aa).

A signal peptide spans 1-20; the sequence is MWGLLLALAAFAPAVGPALG. The tract at residues 30-62 is disordered; it reads AQPGTTKVPGSTPALHSSPAQPPAETANGTSEQ. Positions 32-48 are enriched in polar residues; the sequence is PGTTKVPGSTPALHSSP. N-linked (GlcNAc...) asparagine glycosylation is found at Asn-57, Asn-210, Asn-220, and Asn-318. One can recognise an F5/8 type C domain in the interval 113 to 274; the sequence is TGCPPLGLES…PCLRAEILAC (162 aa). Cys-115 and Cys-274 are oxidised to a cystine. Residues 298-621 form the Peptidase M14 domain; the sequence is QHHNYKAMRK…DALLTYLEQV (324 aa). Zn(2+) contacts are provided by His-360 and Glu-363. Residues Asn-428 and Asn-472 are each glycosylated (N-linked (GlcNAc...) asparagine). His-498 is a binding site for Zn(2+). Catalysis depends on Glu-591, which acts as the Proton donor/acceptor.

This sequence belongs to the peptidase M14 family. Requires Zn(2+) as cofactor.

The protein localises to the secreted. May be involved in cell-cell interactions. No carboxypeptidase activity was found yet. This chain is Probable carboxypeptidase X1 (CPXM1), found in Homo sapiens (Human).